The following is a 688-amino-acid chain: Glycine--tRNA ligase beta subunit (688 aa).

Belongs to the class-II aminoacyl-tRNA synthetase family. In terms of assembly, tetramer of two alpha and two beta subunits.

The protein resides in the cytoplasm. The catalysed reaction is tRNA(Gly) + glycine + ATP = glycyl-tRNA(Gly) + AMP + diphosphate. In Listeria welshimeri serovar 6b (strain ATCC 35897 / DSM 20650 / CCUG 15529 / CIP 8149 / NCTC 11857 / SLCC 5334 / V8), this protein is Glycine--tRNA ligase beta subunit.